The chain runs to 534 residues: Glycolytic genes transcriptional activator GCR2 (534 aa).

Positions Leu-29–Thr-122 are disordered. Positions Gln-30–Pro-43 are enriched in low complexity. Over residues Ser-64–Asp-88 the composition is skewed to polar residues. A compositionally biased stretch (low complexity) spans Ser-89–Thr-122. Ser-151 is subject to Phosphoserine. A disordered region spans residues Leu-230–Asp-333. Positions Asn-238–Gln-252 are enriched in polar residues. The segment covering Gly-253–Asn-279 has biased composition (low complexity). Positions Pro-281–Arg-288 match the Nuclear localization signal motif. Residues Asn-295–Asn-304 show a composition bias toward low complexity. Polar residues predominate over residues Ile-312–Thr-328. Phosphoserine is present on residues Ser-406 and Ser-409. Residues Ile-497 to Arg-534 form a leucine-zipper region.

In terms of assembly, homodimer via the leucine-zipper domain. Forms a complex with a GCR1 homodimer.

It localises to the nucleus. Transcriptional activator required for the expression of glycolytic genes. Enhances the CT box-dependent transcriptional activation of a RAP1-GCR1 complex. Required for GCR1 phosphorylation. The chain is Glycolytic genes transcriptional activator GCR2 (GCR2) from Saccharomyces cerevisiae (strain ATCC 204508 / S288c) (Baker's yeast).